The following is a 235-amino-acid chain: ATP synthase subunit a (235 aa).

5 consecutive transmembrane segments (helical) span residues 17–37 (TTNIVSGLIIYAIVFFTLYGM), 76–96 (SFFAFVLFVFIFFANQFGLIF), 113–133 (PVVTLTLSLMVMVLAFAAGVA), 179–201 (LLMSLIANMAFSHGILTIIPGLF), and 211–230 (VFIGSIQAYVFVTLTTVYIS).

Belongs to the ATPase A chain family. In terms of assembly, F-type ATPases have 2 components, CF(1) - the catalytic core - and CF(0) - the membrane proton channel. CF(1) has five subunits: alpha(3), beta(3), gamma(1), delta(1), epsilon(1). CF(0) has three main subunits: a(1), b(2) and c(9-12). The alpha and beta chains form an alternating ring which encloses part of the gamma chain. CF(1) is attached to CF(0) by a central stalk formed by the gamma and epsilon chains, while a peripheral stalk is formed by the delta and b chains.

The protein localises to the cell membrane. Functionally, key component of the proton channel; it plays a direct role in the translocation of protons across the membrane. This is ATP synthase subunit a from Limosilactobacillus reuteri subsp. reuteri (strain JCM 1112) (Lactobacillus reuteri).